Consider the following 247-residue polypeptide: MKKDTLFATRKEPVPAFDFNESVASVFSDMLERSVPMYRESITRQAELALDFYRSKTLIYDLGCSHGNFGMLAGKRFGDRPFSMVGVDSSPPMIEKYKQRLEQESFRDNIVLVCDRVENLCLGNASVVVVNLTLQFLSLDRRDTLISDIYTALVPGGILLLTEKVLAWDSSIAAVHLDYYSRFKRENGYSELEISQKREALENVLVPETLEVHQQRLARAGFDRMDVWLKWFNFASMIAVKPERPGK.

Residues Tyr-38, Gly-63–Ser-65, Asn-131, and Arg-198 each bind S-adenosyl-L-methionine.

Belongs to the class I-like SAM-binding methyltransferase superfamily. Cx-SAM synthase family. As to quaternary structure, homodimer.

It carries out the reaction prephenate + S-adenosyl-L-methionine = carboxy-S-adenosyl-L-methionine + 3-phenylpyruvate + H2O. Catalyzes the conversion of S-adenosyl-L-methionine (SAM) to carboxy-S-adenosyl-L-methionine (Cx-SAM). The chain is Carboxy-S-adenosyl-L-methionine synthase from Desulforapulum autotrophicum (strain ATCC 43914 / DSM 3382 / VKM B-1955 / HRM2) (Desulfobacterium autotrophicum).